We begin with the raw amino-acid sequence, 240 residues long: UDP-2,3-diacylglucosamine hydrolase (240 aa).

5 residues coordinate Mn(2+): Asp8, His10, Asp41, Asn79, and His114. Position 79–80 (79–80 (NR)) interacts with substrate. Substrate contacts are provided by Asp122, Ser160, Asn164, Lys167, and His195. His195 and His197 together coordinate Mn(2+).

Belongs to the LpxH family. The cofactor is Mn(2+).

It localises to the cell inner membrane. The enzyme catalyses UDP-2-N,3-O-bis[(3R)-3-hydroxytetradecanoyl]-alpha-D-glucosamine + H2O = 2-N,3-O-bis[(3R)-3-hydroxytetradecanoyl]-alpha-D-glucosaminyl 1-phosphate + UMP + 2 H(+). Its pathway is glycolipid biosynthesis; lipid IV(A) biosynthesis; lipid IV(A) from (3R)-3-hydroxytetradecanoyl-[acyl-carrier-protein] and UDP-N-acetyl-alpha-D-glucosamine: step 4/6. Hydrolyzes the pyrophosphate bond of UDP-2,3-diacylglucosamine to yield 2,3-diacylglucosamine 1-phosphate (lipid X) and UMP by catalyzing the attack of water at the alpha-P atom. Involved in the biosynthesis of lipid A, a phosphorylated glycolipid that anchors the lipopolysaccharide to the outer membrane of the cell. The protein is UDP-2,3-diacylglucosamine hydrolase of Yersinia enterocolitica serotype O:8 / biotype 1B (strain NCTC 13174 / 8081).